Consider the following 145-residue polypeptide: 3-hydroxyacyl-[acyl-carrier-protein] dehydratase FabZ (145 aa).

Histidine 49 is an active-site residue.

Belongs to the thioester dehydratase family. FabZ subfamily.

The protein resides in the cytoplasm. It catalyses the reaction a (3R)-hydroxyacyl-[ACP] = a (2E)-enoyl-[ACP] + H2O. Its function is as follows. Involved in unsaturated fatty acids biosynthesis. Catalyzes the dehydration of short chain beta-hydroxyacyl-ACPs and long chain saturated and unsaturated beta-hydroxyacyl-ACPs. This chain is 3-hydroxyacyl-[acyl-carrier-protein] dehydratase FabZ, found in Rickettsia typhi (strain ATCC VR-144 / Wilmington).